The chain runs to 295 residues: Glutamyl-Q tRNA(Asp) synthetase (295 aa).

Residues Arg5 to Ser9 and Glu41 each bind L-glutamate. Residues Pro8–Ser18 carry the 'HIGH' region motif. Zn(2+) contacts are provided by Cys97, Cys99, Tyr117, and Cys121. Residues Tyr178 and Arg196 each contribute to the L-glutamate site. The 'KMSKS' region signature appears at Lys234–Gln238. Residue Lys237 coordinates ATP.

The protein belongs to the class-I aminoacyl-tRNA synthetase family. GluQ subfamily. Zn(2+) is required as a cofactor.

Its function is as follows. Catalyzes the tRNA-independent activation of glutamate in presence of ATP and the subsequent transfer of glutamate onto a tRNA(Asp). Glutamate is transferred on the 2-amino-5-(4,5-dihydroxy-2-cyclopenten-1-yl) moiety of the queuosine in the wobble position of the QUC anticodon. The chain is Glutamyl-Q tRNA(Asp) synthetase from Neisseria gonorrhoeae (strain ATCC 700825 / FA 1090).